The primary structure comprises 576 residues: Arginine--tRNA ligase (576 aa).

A 'HIGH' region motif is present at residues 126–136; that stretch reads ANPTGPMHIGH.

Belongs to the class-I aminoacyl-tRNA synthetase family. As to quaternary structure, monomer.

Its subcellular location is the cytoplasm. It carries out the reaction tRNA(Arg) + L-arginine + ATP = L-arginyl-tRNA(Arg) + AMP + diphosphate. This is Arginine--tRNA ligase from Rickettsia akari (strain Hartford).